The primary structure comprises 151 residues: uncharacterized protein (151 aa).

Positions 1 to 24 (MYYSIIIACLVLLLCLVIYVGHRA) are cleaved as a signal peptide.

The protein belongs to the asfivirus EP152R family.

Its subcellular location is the virion. This is an uncharacterized protein from Ornithodoros (relapsing fever ticks).